The sequence spans 165 residues: 3-isopropylmalate dehydratase small subunit (165 aa).

The protein belongs to the LeuD family. LeuD type 2 subfamily. As to quaternary structure, heterodimer of LeuC and LeuD.

It catalyses the reaction (2R,3S)-3-isopropylmalate = (2S)-2-isopropylmalate. It functions in the pathway amino-acid biosynthesis; L-leucine biosynthesis; L-leucine from 3-methyl-2-oxobutanoate: step 2/4. Functionally, catalyzes the isomerization between 2-isopropylmalate and 3-isopropylmalate, via the formation of 2-isopropylmaleate. In Helicobacter hepaticus (strain ATCC 51449 / 3B1), this protein is 3-isopropylmalate dehydratase small subunit.